We begin with the raw amino-acid sequence, 410 residues long: Lissencephaly-1 homolog A (410 aa).

Residues 7–39 (QRDELNRAIADYLRSNGYEEAYSTFKKEAELDM) form the LisH domain. The stretch at 56 to 82 (TSVIRLQKKVMELESKLNEAKEEITLG) forms a coiled coil. WD repeat units follow at residues 106–147 (GHRS…RTLK), 148–187 (GHTD…CIRT), 190–229 (GHDH…CVKT), 232–271 (GHRE…CKAE), 274–333 (EHEH…CLMT), 336–375 (GHDN…CMKT), and 378–410 (AHEH…WECR).

The protein belongs to the WD repeat LIS1/nudF family. In terms of assembly, can self-associate. Component of the cytosolic PAF-AH (I) heterotetrameric enzyme, which is composed of PAFAH1B1 (beta), PAFAH1B2 (alpha2) and PAFAH1B3 (alpha1) subunits. The catalytic activity of the enzyme resides in the alpha1 (PAFAH1B3) and alpha2 (PAFAH1B2) subunits, whereas the beta subunit (PAFAH1B1) has regulatory activity. Trimer formation is not essential for the catalytic activity. Interacts with dynein, dynactin, nde1 and ndel1.

It is found in the cytoplasm. The protein resides in the cytoskeleton. It localises to the microtubule organizing center. Its subcellular location is the centrosome. In terms of biological role, regulatory subunit (beta subunit) of the cytosolic type I platelet-activating factor (PAF) acetylhydrolase (PAF-AH (I)), an enzyme that catalyzes the hydrolyze of the acetyl group at the sn-2 position of PAF and its analogs and participates in PAF inactivation. Regulates the PAF-AH (I) activity in a catalytic dimer composition-dependent manner. Positively regulates the activity of the minus-end directed microtubule motor protein dynein. May enhance dynein-mediated microtubule sliding by targeting dynein to the microtubule plus end. Required for several dynein- and microtubule-dependent processes such as the maintenance of Golgi integrity, the peripheral transport of microtubule fragments and the coupling of the nucleus and centrosome. May be required for proliferation of neuronal precursors and neuronal migration. The polypeptide is Lissencephaly-1 homolog A (pafah1b1-1) (Salmo salar (Atlantic salmon)).